The primary structure comprises 418 residues: Putative ion-transport protein YfeO (418 aa).

Transmembrane regions (helical) follow at residues 10 to 30 (LLLS…LIVV), 54 to 74 (DSPL…GLVI), 99 to 119 (ALPG…SLGP), 120 to 140 (EHPI…RLLP), 149 to 169 (ILAS…AALI), 186 to 206 (LFAP…FFHP), 223 to 243 (ILSG…AVWC), 258 to 278 (VLVL…GGPV), 300 to 320 (DYFL…ASGF), 322 to 342 (GGRI…LHEH), 343 to 363 (VPAV…VLVV), and 371 to 391 (LFMA…CIVM).

The protein belongs to the chloride channel (TC 2.A.49) family.

The protein localises to the cell membrane. The protein is Putative ion-transport protein YfeO of Shigella boydii serotype 18 (strain CDC 3083-94 / BS512).